A 483-amino-acid polypeptide reads, in one-letter code: Probable cytosol aminopeptidase (483 aa).

Lys245 and Asp250 together coordinate Mn(2+). Lys257 is a catalytic residue. The Mn(2+) site is built by Asp268, Asp327, and Glu329. Arg331 is an active-site residue.

The protein belongs to the peptidase M17 family. Mn(2+) is required as a cofactor.

Its subcellular location is the cytoplasm. The enzyme catalyses Release of an N-terminal amino acid, Xaa-|-Yaa-, in which Xaa is preferably Leu, but may be other amino acids including Pro although not Arg or Lys, and Yaa may be Pro. Amino acid amides and methyl esters are also readily hydrolyzed, but rates on arylamides are exceedingly low.. The catalysed reaction is Release of an N-terminal amino acid, preferentially leucine, but not glutamic or aspartic acids.. Functionally, presumably involved in the processing and regular turnover of intracellular proteins. Catalyzes the removal of unsubstituted N-terminal amino acids from various peptides. The sequence is that of Probable cytosol aminopeptidase from Wolinella succinogenes (strain ATCC 29543 / DSM 1740 / CCUG 13145 / JCM 31913 / LMG 7466 / NCTC 11488 / FDC 602W) (Vibrio succinogenes).